The sequence spans 431 residues: 23S rRNA (uracil(1939)-C(5))-methyltransferase RlmD (431 aa).

In terms of domain architecture, TRAM spans Arg-10–Arg-68. 4 residues coordinate [4Fe-4S] cluster: Cys-81, Cys-87, Cys-90, and Cys-161. The S-adenosyl-L-methionine site is built by Gln-264, Phe-293, Asn-298, Glu-314, Asn-341, and Asp-362. Cys-388 acts as the Nucleophile in catalysis.

Belongs to the class I-like SAM-binding methyltransferase superfamily. RNA M5U methyltransferase family. RlmD subfamily.

It carries out the reaction uridine(1939) in 23S rRNA + S-adenosyl-L-methionine = 5-methyluridine(1939) in 23S rRNA + S-adenosyl-L-homocysteine + H(+). In terms of biological role, catalyzes the formation of 5-methyl-uridine at position 1939 (m5U1939) in 23S rRNA. The chain is 23S rRNA (uracil(1939)-C(5))-methyltransferase RlmD from Salmonella typhimurium (strain LT2 / SGSC1412 / ATCC 700720).